We begin with the raw amino-acid sequence, 171 residues long: Probable deoxyuridine 5'-triphosphate nucleotidohydrolase (171 aa).

It belongs to the dCTP deaminase family. Archaeal dUTPase subfamily.

The catalysed reaction is dUTP + H2O = dUMP + diphosphate + H(+). The protein operates within pyrimidine metabolism; dUMP biosynthesis; dUMP from dCTP (dUTP route): step 2/2. This enzyme is involved in nucleotide metabolism: it produces dUMP, the immediate precursor of thymidine nucleotides and it decreases the intracellular concentration of dUTP so that uracil cannot be incorporated into DNA. In Methanosarcina acetivorans (strain ATCC 35395 / DSM 2834 / JCM 12185 / C2A), this protein is Probable deoxyuridine 5'-triphosphate nucleotidohydrolase.